The primary structure comprises 93 residues: uncharacterized protein (93 aa).

The protein to E.coli YeaC.

This is an uncharacterized protein from Pseudoalteromonas haloplanktis (Alteromonas haloplanktis).